A 271-amino-acid chain; its full sequence is Energy-coupling factor transporter ATP-binding protein EcfA (271 aa).

Residues 2 to 231 (ISIQNLTFYY…PLFLQQYKLT (230 aa)) enclose the ABC transporter domain. 34–41 (GHNGSGKS) lines the ATP pocket.

The protein belongs to the ABC transporter superfamily. Energy-coupling factor EcfA family. In terms of assembly, forms a stable energy-coupling factor (ECF) transporter complex composed of 2 membrane-embedded substrate-binding proteins (S component), 2 ATP-binding proteins (A component) and 2 transmembrane proteins (T component).

It localises to the cell membrane. ATP-binding (A) component of a common energy-coupling factor (ECF) ABC-transporter complex. Unlike classic ABC transporters this ECF transporter provides the energy necessary to transport a number of different substrates. The protein is Energy-coupling factor transporter ATP-binding protein EcfA of Aster yellows witches'-broom phytoplasma (strain AYWB).